The chain runs to 901 residues: HTH-type transcriptional regulator MalT (901 aa).

39 to 46 is an ATP binding site; the sequence is SPAGYGKT. The HTH luxR-type domain occupies 829–894; it reads ELIRTSPLTQ…DAVQHAQQLL (66 aa). Residues 853 to 872 constitute a DNA-binding region (H-T-H motif); it reads NEQIAGELEVAATTIKTHIR.

It belongs to the MalT family. In terms of assembly, monomer in solution. Oligomerizes to an active state in the presence of the positive effectors ATP and maltotriose.

Its activity is regulated as follows. Activated by ATP and maltotriose, which are both required for DNA binding. Functionally, positively regulates the transcription of the maltose regulon whose gene products are responsible for uptake and catabolism of malto-oligosaccharides. Specifically binds to the promoter region of its target genes, recognizing a short DNA motif called the MalT box. The chain is HTH-type transcriptional regulator MalT from Escherichia fergusonii (strain ATCC 35469 / DSM 13698 / CCUG 18766 / IAM 14443 / JCM 21226 / LMG 7866 / NBRC 102419 / NCTC 12128 / CDC 0568-73).